The sequence spans 185 residues: Adenine phosphoribosyltransferase (185 aa).

Belongs to the purine/pyrimidine phosphoribosyltransferase family. Homodimer.

It localises to the cytoplasm. The catalysed reaction is AMP + diphosphate = 5-phospho-alpha-D-ribose 1-diphosphate + adenine. The protein operates within purine metabolism; AMP biosynthesis via salvage pathway; AMP from adenine: step 1/1. In terms of biological role, catalyzes a salvage reaction resulting in the formation of AMP, that is energically less costly than de novo synthesis. The protein is Adenine phosphoribosyltransferase of Kineococcus radiotolerans (strain ATCC BAA-149 / DSM 14245 / SRS30216).